Here is a 237-residue protein sequence, read N- to C-terminus: Sugar fermentation stimulation protein homolog (237 aa).

It belongs to the SfsA family.

The sequence is that of Sugar fermentation stimulation protein homolog from Pseudomonas putida (strain W619).